Here is a 349-residue protein sequence, read N- to C-terminus: tRNA pseudouridine synthase D (349 aa).

F27 is a substrate binding site. D80 acts as the Nucleophile in catalysis. N129 is a binding site for substrate. Residues 155–303 (GVPNYFGAQR…VEAARRAMLL (149 aa)) form the TRUD domain. F329 is a substrate binding site.

This sequence belongs to the pseudouridine synthase TruD family.

It catalyses the reaction uridine(13) in tRNA = pseudouridine(13) in tRNA. Functionally, responsible for synthesis of pseudouridine from uracil-13 in transfer RNAs. This chain is tRNA pseudouridine synthase D, found in Enterobacter sp. (strain 638).